A 169-amino-acid polypeptide reads, in one-letter code: N-alpha-acetyltransferase 50 (169 aa).

Residues 6-155 (IELGDVTPHN…DAHVLQKNLK (150 aa)) enclose the N-acetyltransferase domain. T12 is subject to Phosphothreonine. Y31 is a substrate binding site. Residues K34 and K37 each carry the N6-acetyllysine modification. Residue Y73 is part of the active site. Residue M75 participates in substrate binding. 77–90 (LGCLAPYRRLGIGT) contributes to the acetyl-CoA binding site. Y110 is modified (phosphotyrosine). Residue H112 is part of the active site. 117–126 (NESAIDFYRK) provides a ligand contact to CoA. A substrate region spans residues 138 to 141 (YYKR). The residue at position 140 (K140) is an N6-acetyllysine.

The protein belongs to the acetyltransferase family. GNAT subfamily. In terms of assembly, component of the N-terminal acetyltransferase E (NatE) complex at least composed of NAA10, NAA15 and NAA50. Interacts with NAA10. Interacts with NAA15. Predominantly interacts with NAA15 in the N-terminal acetyltransferase A complex (NatA complex); the interactions reduce the acetylation activity of the NatA complex. Component of the N-terminal acetyltransferase E (NatE)/HYPK complex at least composed of NAA10, NAA15, NAA50 and HYPK. Within the complex interacts with NAA15. Its capacity to interact with the NatA complex is reduced by HYPK. Interacts with NAA35.

Its subcellular location is the cytoplasm. It is found in the nucleus. The catalysed reaction is N-terminal L-methionyl-L-alanyl-[protein] + acetyl-CoA = N-terminal N(alpha)-acetyl-L-methionyl-L-alanyl-[protein] + CoA + H(+). It carries out the reaction N-terminal L-methionyl-L-seryl-[protein] + acetyl-CoA = N-terminal N(alpha)-acetyl-L-methionyl-L-seryl-[protein] + CoA + H(+). The enzyme catalyses N-terminal L-methionyl-L-valyl-[protein] + acetyl-CoA = N-terminal N(alpha)-acetyl-L-methionyl-L-valyl-[protein] + CoA + H(+). It catalyses the reaction N-terminal L-methionyl-L-threonyl-[protein] + acetyl-CoA = N-terminal N(alpha)-acetyl-L-methionyl-L-threonyl-[protein] + CoA + H(+). The catalysed reaction is N-terminal L-methionyl-L-lysyl-[protein] + acetyl-CoA = N-terminal N(alpha)-acetyl-L-methionyl-L-lysyl-[protein] + CoA + H(+). It carries out the reaction N-terminal L-methionyl-L-leucyl-[protein] + acetyl-CoA = N-terminal N(alpha)-acetyl-L-methionyl-L-leucyl-[protein] + CoA + H(+). The enzyme catalyses N-terminal L-methionyl-L-phenylalanyl-[protein] + acetyl-CoA = N-terminal N(alpha)-acetyl-L-methionyl-L-phenylalanyl-[protein] + CoA + H(+). It catalyses the reaction N-terminal L-methionyl-L-tyrosyl-[protein] + acetyl-CoA = N-terminal N(alpha)-acetyl-L-methionyl-L-tyrosyl-[protein] + CoA + H(+). N-alpha-acetyltransferase that acetylates the N-terminus of proteins that retain their initiating methionine. Has a broad substrate specificity: able to acetylate the initiator methionine of most peptides, except for those with a proline in second position. Also displays N-epsilon-acetyltransferase activity by mediating acetylation of the side chain of specific lysines on proteins. Autoacetylates in vivo. The relevance of N-epsilon-acetyltransferase activity is however unclear: able to acetylate H4 in vitro, but this result has not been confirmed in vivo. Component of N-alpha-acetyltransferase complexes containing NAA10 and NAA15, which has N-alpha-acetyltransferase activity. Does not influence the acetyltransferase activity of NAA10. However, it negatively regulates the N-alpha-acetyltransferase activity of the N-terminal acetyltransferase A complex (also called the NatA complex). The multiprotein complexes probably constitute the major contributor for N-terminal acetylation at the ribosome exit tunnel, with NAA10 acetylating all amino termini that are devoid of methionine and NAA50 acetylating other peptides. Required for sister chromatid cohesion during mitosis by promoting binding of CDCA5/sororin to cohesin: may act by counteracting the function of NAA10. The sequence is that of N-alpha-acetyltransferase 50 (NAA50) from Bos taurus (Bovine).